The following is a 93-amino-acid chain: UPF0213 protein CPE1444 (93 aa).

Positions 1–75 (MNYVYILKCK…KKLTRNQKLQ (75 aa)) constitute a GIY-YIG domain.

It belongs to the UPF0213 family.

This is UPF0213 protein CPE1444 from Clostridium perfringens (strain 13 / Type A).